The following is a 901-amino-acid chain: Protein translocase subunit SecA (901 aa).

ATP contacts are provided by residues glutamine 87, 105–109 (GEGKT), and aspartate 512. Zn(2+)-binding residues include cysteine 885, cysteine 887, cysteine 896, and histidine 897.

The protein belongs to the SecA family. In terms of assembly, monomer and homodimer. Part of the essential Sec protein translocation apparatus which comprises SecA, SecYEG and auxiliary proteins SecDF-YajC and YidC. Zn(2+) is required as a cofactor.

The protein localises to the cell inner membrane. It is found in the cytoplasm. The catalysed reaction is ATP + H2O + cellular proteinSide 1 = ADP + phosphate + cellular proteinSide 2.. Part of the Sec protein translocase complex. Interacts with the SecYEG preprotein conducting channel. Has a central role in coupling the hydrolysis of ATP to the transfer of proteins into and across the cell membrane, serving both as a receptor for the preprotein-SecB complex and as an ATP-driven molecular motor driving the stepwise translocation of polypeptide chains across the membrane. The protein is Protein translocase subunit SecA of Salmonella enteritidis PT4 (strain P125109).